The sequence spans 2549 residues: MLGTGPATATAGAATSSNVSVLQQFASGLKSRNEETRAKAAKELQHYVTMELREMSQEESTRFYDQLNHHIFELVSSSDANERKGGILAIASLIGVEGGNSTRIGRFANYLRNLLPSSDPVVMEMASKAIGRLAMAGDTFTAEYVEFEVKRALEWLGADRNEGRRHAAVLVLRELAISVPTFFFQQVQPFFDNIFVAVWDPKQAIREGAVAALRACLILTTQREPKEMQKPQWYRHTFEEAEKGFDETLAKEKGMNRDDRIHGALLILNELVRISSMEGERLREEMEEITQQQLVHDKYCKDLMGFGTKPRHITPFTSFQAVQPQQSNALVGLLGYSSHQGLMGFGASPSPTKSTLVESRCCRDLMEEKFDQVCQWVLKCRSSKNSLIQMTILNLLPRLAAFRPSAFTDTQYLQDTMNHVLSCVKKEKERTAAFQALGLLSVAVRSEFKVYLPRVLDIIRAALPPKDFAHKRQKTVQVDATVFTCISMLARAMGPGIQQDIKELLEPMLAVGLSPALTAVLYDLSRQIPQLKKDIQDGLLKMLSLVLMHKPLRHPGMPKGLAHQLASPGLTTLPEASDVASITLALRTLGSFEFEGHSLTQFVRHCADHFLNSEHKEIRMEAARTCSRLLTPSIHLISGHAHVVSQTAVQVVADVLSKLLVVGITDPDPDIRYCVLASLDERFDAHLAQAENLQALFVALNDQVFEIRELAICTVGRLSSMNPAFVMPFLRKMLIQILTELEHSGIGRIKEQSARMLGHLVSNAPRLIRPYMEPILKALILKLKDPDPDPNPGVINNVLATIGELAQVSGLEMRKWVDELFVIIMDMLQDSSLLAKRQVALWTLGQLVASTGYVVEPYRKYPTLLEVLLNFLKTEQNQGTRREAIRVLGLLGALDPYKHKVNIGMIDQSRDASAVSLSESKSSQDSSDYSTSEMLVNMGNLPLDEFYPAVSMVALMRIFRDQSLSHHHTMVVQAITFIFKSLGLKCVQFLPQVMPTFLNVIRVCDGAIREFLFQQLGMLVSFVKSHIRPYMDEIVTLMREFWVMNTSIQSTIILLIEQIVVALGGEFKLYLPQLIPHMLRVFMHDNSQGRIVSIKLLAAIQLFGANLDDYLHLLLPPIVKLFDAPEVPLPSRKAALETVDRLTESLDFTDYASRIIHPIVRTLDQSPELRSTAMDTLSSLVFQLGKKYQIFIPMVNKVLVRHRINHQRYDVLICRIVKGYTLADEEEDPLIYQHRMLRSSQGDALASGPVETGPMKKLHVSTINLQKAWGAARRVSKDDWLEWLRRLSLELLKDSSSPSLRSCWALAQAYNPMARDLFNAAFVSCWSELNEDQQDELIRSIELALTSQDIAEVTQTLLNLAEFMEHSDKGPLPLRDDNGIVLLGERAAKCRAYAKALHYKELEFQKGPTPAILESLISINNKLQQPEAASGVLEYAMKHFGELEIQATWYEKLHEWEDALVAYDKKMDTNKDDPELMLGRMRCLEALGEWGQLHQQCCEKWTLVNDETQAKMARMAAAAAWGLGQWDSMEEYTCMIPRDTHDGAFYRAVLALHQDLFSLAQQCIDKARDLLDAELTAMAGESYSRAYGAMVSCHMLSELEEVIQYKLVPERREIIRQIWWERLQGCQRIVEDWQKILMVRSLVVSPHEDMRTWLKYASLCGKSGRLALAHKTLVLLLGVDPSRQLDHPLPTVHPQVTYAYMKNMWKSARKIDAFQHMQHFVQTMQQQAQHAIATEDQQHKQELHKLMARCFLKLGEWQLNLQGINESTIPKVLQYYSAATEHDRSWYKAWHAWAVMNFEAVLHYKHQNQARDEKKKLRHASGANITNATTTATTAASAAAATSTEGSNSESEAESNESSPTPSPLQKKVTEDLSKTLLLYTVPAVQGFFRSISLSRGNNLQDTLRVLTLWFDYGHWPDVNEALVEGVKAIQIDTWLQVIPQLIARIDTPRPLVGRLIHQLLTDIGRYHPQALIYPLTVASKSTTTARHNAANKILKNMCEHSNTLVQQAMMVSEELIRVAILWHEMWHEGLEEASRLYFGERNVKGMFEVLEPLHAMMERGPQTLKETSFNQAYGRDLMEAQEWCRKYMKSGNVKDLTQAWDLYYHVFRRISKQLPQLTSLELQYVSPKLLMCRDLELAVPGTYDPNQPIIRIQSIAPSLQVITSKQRPRKLTLMGSNGHEFVFLLKGHEDLRQDERVMQLFGLVNTLLANDPTSLRKNLSIQRYAVIPLSTNSGLIGWVPHCDTLHALIRDYREKKKILLNIEHRIMLRMAPDYDHLTLMQKVEVFEHAVNNTAGDDLAKLLWLKSPSSEVWFDRRTNYTRSLAVMSMVGYILGLGDRHPSNLMLDRLSGKILHIDFGDCFEVAMTREKFPEKIPFRLTRMLTNAMEVTGLDGNYRTTCHTVMEVLREHKDSVMAVLEAFVYDPLLNWRLMDTNAKGNKRSRTRTDSYSAGQSVEILDGVELGEPAHKKTGTTVPESIHSFIGDGLVKPEALNKKAIQIINRVRDKLTGRDFSHDDTLDVPTQVELLIKQATSHENLCQCYIGWCPFW.

Position 1 is an N-acetylmethionine (M1). The interaction with NBN stretch occupies residues M1–V651. HEAT repeat units follow at residues S16 to R53, M55 to G99, N100 to G137, D138 to V179, P180 to T220, Q222 to S276, M277 to I313, T314 to D364, L365 to D409, T410 to R445, S446 to G494, P495 to P529, Q530 to H563, Q564 to G596, H597 to L636, I637 to F683, H686 to A724, M727 to R766, R769 to L811, R814 to Y853, P857 to A893, L894 to P942, L943 to Q988, F989 to I1027, P1029 to K1068, L1069 to A1105, N1106 to E1144, S1145 to Y1188, Q1189 to E1225, E1226 to R1273, R1274 to N1311, and P1312 to L1345. S567 is subject to Phosphoserine. T1162 is subject to Phosphothreonine. An N6-acetyllysine modification is found at K1218. S1261 is modified (phosphoserine). TPR repeat units follow at residues T1346–L1382, L1383–P1408, T1409–E1442, L1443–D1473, P1474–E1507, T1508–H1541, D1542–E1574, L1575–I1614, I1615–D1649, M1650–H1693, P1694–A1731, I1732–W1786, Y1787–G1846, N1898–I1930, Q1931–Q1970, and A1971–L2005. An FAT domain is found at L1382 to S1982. 1D-myo-inositol hexakisphosphate is bound by residues K1662, K1702, and R1749. Positions D1812 to K1867 are disordered. Low complexity predominate over residues T1826–P1860. The sufficient for interaction with the FKBP1A/rapamycin complex stretch occupies residues V2012–Y2144. K2066 is covalently cross-linked (Glycyl lysine isopeptide (Lys-Gly) (interchain with G-Cter in ubiquitin)). The PI3K/PI4K catalytic domain maps to I2156–K2469. S2159 carries the phosphoserine modification. The segment at V2162 to R2168 is G-loop. A Phosphothreonine modification is found at T2164. Residues S2165 and Q2167 each contribute to the ATP site. A Phosphothreonine; by PKB/AKT1 modification is found at T2173. L2185, K2187, E2190, Y2225, G2238, W2239, V2240, and T2245 together coordinate ATP. The interval K2258–G2296 is interaction with MLST8. The catalytic loop stretch occupies residues G2335–N2343. N2343 lines the Mg(2+) pocket. ATP contacts are provided by M2345 and I2356. Residues H2355–T2380 form an activation loop region. Residue D2357 participates in Mg(2+) binding. A Phosphothreonine; by RPS6KB1 modification is found at T2446. S2448 carries the phosphoserine; by RPS6KB1 modification. The residue at position 2478 (S2478) is a Phosphoserine. A Phosphoserine; by autocatalysis modification is found at S2481. The region spanning D2517–W2549 is the FATC domain.

The protein belongs to the PI3/PI4-kinase family. In terms of assembly, part of the mechanistic target of rapamycin complex 1 (mTORC1) which contains MTOR, MLST8 and RPTOR. The mTORC1 complex is a 1 Md obligate dimer of two stoichiometric heterotetramers with overall dimensions of 290 A x 210 A x 135 A. It has a rhomboid shape and a central cavity, the dimeric interfaces are formed by interlocking interactions between the two MTOR and the two RPTOR subunits. The MLST8 subunit forms distal foot-like protuberances, and contacts only one MTOR within the complex, while the small AKT1S1/PRAS40 localizes to the midsection of the central core, in close proximity to RPTOR. mTORC1 associates with AKT1S1/PRAS40, which inhibits its activity by blocking MTOR substrate-recruitment site. Component of the mechanistic target of rapamycin complex 2 (mTORC2), consisting in two heterotretramers composed of MTOR, MLST8, RICTOR and MAPKAP1/SIN1. Interacts with PLPP7 and PML. Interacts with PRR5 and RICTOR; the interaction is direct within the mTORC2 complex and interaction with RICTOR is enhanced by deubiquitination of RICTOR by USP9X. mTORC1 and mTORC2 associate with DEPTOR, which regulates their activity. Interacts with WAC; WAC positively regulates MTOR activity by promoting the assembly of the TTT complex composed of TELO2, TTI1 and TTI2 and the RUVBL complex composed of RUVBL1 and RUVBL2 into the TTT-RUVBL complex which leads to the dimerization of the mTORC1 complex and its subsequent activation. Interacts with UBQLN1. Interacts with TTI1 and TELO2. Interacts with CLIP1; phosphorylates and regulates CLIP1. Interacts with NBN. Interacts with HTR6. Interacts with BRAT1. Interacts with MEAK7 (via C-terminal domain); the interaction increases upon nutrient stimulation. Interacts with TM4SF5; the interaction is positively regulated by arginine and is negatively regulated by leucine. Interacts with GPR137B. Interacts with NCKAP1L. Interacts with TPCN1 and TPCN2; the interaction is required for TPCN1 and TPCN2 sensitivity to ATP. Interacts with ATP6V1A and with CRYAB, forming a ternary complex. Interacts with SLC38A7; this interaction mediates the recruitment of mTORC1 to the lysosome and its subsequent activation. Interacts with TSPAN8. In terms of processing, autophosphorylates when part of mTORC1 or mTORC2. Phosphorylation at Ser-1261, Ser-2159 and Thr-2164 promotes autophosphorylation. Phosphorylated at Ser-2448 by RPS6KB1. Phosphorylation in the kinase domain modulates the interactions of MTOR with RPTOR and AKT1S1/PRAS40 and leads to increased intrinsic mTORC1 kinase activity. Phosphorylation at Ser-2159 by TBK1 in response to growth factors and pathogen recognition receptors promotes mTORC1 activity. Phosphorylation at Ser-2159 by TBK1 in response to EGF growth factor promotes mTORC2 activity, leading to AKT1 phosphorylation and activation. Phosphorylation at Thr-2173 in the ATP-binding region by AKT1 strongly reduces kinase activity. Ubiquitinated at Lys-2066 by the SCF(FBXO22) complex via 'Lys-27'-linked ubiquitination prevents mTORC1 substrate recruitment.

The protein resides in the lysosome membrane. It localises to the endoplasmic reticulum membrane. Its subcellular location is the golgi apparatus membrane. It is found in the cell membrane. The protein localises to the mitochondrion outer membrane. The protein resides in the cytoplasm. It localises to the nucleus. Its subcellular location is the PML body. It is found in the microsome membrane. The protein localises to the cytoplasmic vesicle. The protein resides in the phagosome. The enzyme catalyses L-seryl-[protein] + ATP = O-phospho-L-seryl-[protein] + ADP + H(+). The catalysed reaction is L-threonyl-[protein] + ATP = O-phospho-L-threonyl-[protein] + ADP + H(+). It carries out the reaction L-tyrosyl-[protein] + ATP = O-phospho-L-tyrosyl-[protein] + ADP + H(+). With respect to regulation, the mTORC1 complex is activated in response to nutrients, growth factors or amino acids: activation requires relocalization of the mTORC1 complex to lysosomes that is mediated by the Ragulator complex, SLC38A9, and the Rag GTPases RagA/RRAGA, RagB/RRAGB, RagC/RRAGC and RagD/RRAGD. Activation of mTORC1 by growth factors such as insulin involves AKT1-mediated phosphorylation of TSC1-TSC2, which leads to the activation of the RHEB GTPase a potent activator of the protein kinase activity of mTORC1. Insulin-stimulated and amino acid-dependent phosphorylation at Ser-1261 promotes autophosphorylation and the activation of mTORC1. On the other hand, low cellular energy levels can inhibit mTORC1 through activation of PRKAA1 while hypoxia inhibits mTORC1 through a REDD1-dependent mechanism which may also require PRKAA1. The kinase activity of MTOR within the mTORC1 complex is positively regulated by MLST8. The kinase activity of MTOR is inhibited by DEPTOR and AKT1S1. The non-canonical mTORC1 complex is independent of the RHEB GTPase and specifically mediates phosphorylation of MiT/TFE factors TFEB and TFE3 but not other mTORC1 substrates: it is activated by FLCN, which activates Rag GTPases RagC/RRAGC and RagD/RRAGD. MTOR is the target of the immunosuppressive and anti-cancer drug rapamycin which acts in complex with FKBP1A/FKBP12, and specifically inhibits its kinase activity. mTORC2 is also activated by growth factors, but seems to be nutrient-insensitive. mTORC2 associates and is directly activated by ribosomes. mTORC2 may also be regulated by RHEB but in an indirect manner through the PI3K signaling pathway. Its function is as follows. Serine/threonine protein kinase which is a central regulator of cellular metabolism, growth and survival in response to hormones, growth factors, nutrients, energy and stress signals. MTOR directly or indirectly regulates the phosphorylation of at least 800 proteins. Functions as part of 2 structurally and functionally distinct signaling complexes mTORC1 and mTORC2 (mTOR complex 1 and 2). In response to nutrients, growth factors or amino acids, mTORC1 is recruited to the lysosome membrane and promotes protein, lipid and nucleotide synthesis by phosphorylating key regulators of mRNA translation and ribosome synthesis. This includes phosphorylation of EIF4EBP1 and release of its inhibition toward the elongation initiation factor 4E (eiF4E). Moreover, phosphorylates and activates RPS6KB1 and RPS6KB2 that promote protein synthesis by modulating the activity of their downstream targets including ribosomal protein S6, eukaryotic translation initiation factor EIF4B, and the inhibitor of translation initiation PDCD4. Stimulates the pyrimidine biosynthesis pathway, both by acute regulation through RPS6KB1-mediated phosphorylation of the biosynthetic enzyme CAD, and delayed regulation, through transcriptional enhancement of the pentose phosphate pathway which produces 5-phosphoribosyl-1-pyrophosphate (PRPP), an allosteric activator of CAD at a later step in synthesis, this function is dependent on the mTORC1 complex. Regulates ribosome synthesis by activating RNA polymerase III-dependent transcription through phosphorylation and inhibition of MAF1 an RNA polymerase III-repressor. Activates dormant ribosomes by mediating phosphorylation of SERBP1, leading to SERBP1 inactivation and reactivation of translation. In parallel to protein synthesis, also regulates lipid synthesis through SREBF1/SREBP1 and LPIN1. To maintain energy homeostasis mTORC1 may also regulate mitochondrial biogenesis through regulation of PPARGC1A. In the same time, mTORC1 inhibits catabolic pathways: negatively regulates autophagy through phosphorylation of ULK1. Under nutrient sufficiency, phosphorylates ULK1 at 'Ser-758', disrupting the interaction with AMPK and preventing activation of ULK1. Also prevents autophagy through phosphorylation of the autophagy inhibitor DAP. Also prevents autophagy by phosphorylating RUBCNL/Pacer under nutrient-rich conditions. Prevents autophagy by mediating phosphorylation of AMBRA1, thereby inhibiting AMBRA1 ability to mediate ubiquitination of ULK1 and interaction between AMBRA1 and PPP2CA. mTORC1 exerts a feedback control on upstream growth factor signaling that includes phosphorylation and activation of GRB10 a INSR-dependent signaling suppressor. Among other potential targets mTORC1 may phosphorylate CLIP1 and regulate microtubules. The mTORC1 complex is inhibited in response to starvation and amino acid depletion. The non-canonical mTORC1 complex, which acts independently of RHEB, specifically mediates phosphorylation of MiT/TFE factors TFEB and TFE3 in the presence of nutrients, promoting their cytosolic retention and inactivation. Upon starvation or lysosomal stress, inhibition of mTORC1 induces dephosphorylation and nuclear translocation of TFEB and TFE3, promoting their transcription factor activity. The mTORC1 complex regulates pyroptosis in macrophages by promoting GSDMD oligomerization. MTOR phosphorylates RPTOR which in turn inhibits mTORC1. As part of the mTORC2 complex, MTOR transduces signals from growth factors to pathways involved in proliferation, cytoskeletal organization, lipogenesis and anabolic output. In response to growth factors, mTORC2 phosphorylates and activates AGC protein kinase family members, including AKT (AKT1, AKT2 and AKT3), PKC (PRKCA, PRKCB and PRKCE) and SGK1. In contrast to mTORC1, mTORC2 is nutrient-insensitive. mTORC2 plays a critical role in AKT1 activation by mediating phosphorylation of different sites depending on the context, such as 'Thr-450', 'Ser-473', 'Ser-477' or 'Thr-479', facilitating the phosphorylation of the activation loop of AKT1 on 'Thr-308' by PDPK1/PDK1 which is a prerequisite for full activation. mTORC2 also regulates the phosphorylation of SGK1 at 'Ser-422'. mTORC2 may regulate the actin cytoskeleton, through phosphorylation of PRKCA, PXN and activation of the Rho-type guanine nucleotide exchange factors RHOA and RAC1A or RAC1B. The mTORC2 complex also phosphorylates various proteins involved in insulin signaling, such as FBXW8 and IGF2BP1. May also regulate insulin signaling by acting as a tyrosine protein kinase that catalyzes phosphorylation of IGF1R and INSR. Regulates osteoclastogenesis by adjusting the expression of CEBPB isoforms. Plays an important regulatory role in the circadian clock function; regulates period length and rhythm amplitude of the suprachiasmatic nucleus (SCN) and liver clocks. This is Serine/threonine-protein kinase mTOR from Rattus norvegicus (Rat).